The primary structure comprises 173 residues: HTH-type transcriptional regulator IscR (173 aa).

The HTH rrf2-type domain maps to 2 to 131 (KLTSKGRYAV…NDITLGELMK (130 aa)). A DNA-binding region (H-T-H motif) is located at residues 28–51 (LADISERQGISLSYLEQLFSKLRK). Cys92, Cys98, and Cys104 together coordinate [2Fe-2S] cluster.

[2Fe-2S] cluster is required as a cofactor.

Its function is as follows. Regulates the transcription of several operons and genes involved in the biogenesis of Fe-S clusters and Fe-S-containing proteins. This chain is HTH-type transcriptional regulator IscR, found in Vibrio atlanticus (strain LGP32) (Vibrio splendidus (strain Mel32)).